The sequence spans 521 residues: Tubulin-specific chaperone E (521 aa).

The 45-residue stretch at 24–68 (GPVPPTAGVWLGVEWDHPERGKHDGSHDGVRYFTCRHPTGGSFVR) folds into the CAP-Gly domain. 7 LRR repeats span residues 147 to 168 (FVQS…AAIT), 173 to 194 (SLQE…SSLS), 199 to 220 (HLRV…HCAP), 224 to 245 (QVEE…EHVL), 247 to 268 (ALTV…EISH), 271 to 292 (RLER…DVPA), and 301 to 322 (ALKE…NELE). An LRRCT domain is found at 335 to 377 (NPLLHKEKNLETARQIMIARLGQLELLDMRQILSDERRGAELD).

It belongs to the TBCE family. In terms of assembly, supercomplex made of cofactors A to E. Cofactors A and D function by capturing and stabilizing tubulin in a quasi-native conformation. Cofactor E binds to the cofactor D-tubulin complex; interaction with cofactor C then causes the release of tubulin polypeptides that are committed to the native state.

The protein localises to the cytoplasm. It is found in the cytoskeleton. In terms of biological role, tubulin-folding protein; involved in the second step of the tubulin folding pathway. This is Tubulin-specific chaperone E (tbce) from Danio rerio (Zebrafish).